We begin with the raw amino-acid sequence, 533 residues long: Probable nucleolar protein 5-2 (533 aa).

The 119-residue stretch at 281–399 (IAPNLTALVG…LEARLRNLEG (119 aa)) folds into the Nop domain. Disordered regions lie at residues 401–433 (DLGRLSGSSKGKPKIEVYNKDKKMGSGGLITPA) and 445–533 (GETS…KSKD). The span at 413–424 (PKIEVYNKDKKM) shows a compositional bias: basic and acidic residues. Positions 521–533 (KKDKKEKKKKSKD) are enriched in basic residues.

This sequence belongs to the NOP5/NOP56 family.

It localises to the nucleus. It is found in the nucleolus. Required for 60S ribosomal subunit biogenesis. This Arabidopsis thaliana (Mouse-ear cress) protein is Probable nucleolar protein 5-2 (NOP5-2).